A 1578-amino-acid chain; its full sequence is Pentafunctional AROM polypeptide (1578 aa).

The segment at 1 to 384 (MTGPTKISIL…YEPRASVVPN (384 aa)) is 3-dehydroquinate synthase. Residues 44–46 (DTN), 81–84 (EVSK), 114–116 (GGV), and aspartate 119 each bind NAD(+). Residue arginine 130 participates in 7-phospho-2-dehydro-3-deoxy-D-arabino-heptonate binding. Residue 139 to 140 (TT) coordinates NAD(+). 2 residues coordinate 7-phospho-2-dehydro-3-deoxy-D-arabino-heptonate: aspartate 146 and lysine 152. Residue lysine 161 participates in NAD(+) binding. A 7-phospho-2-dehydro-3-deoxy-D-arabino-heptonate-binding site is contributed by asparagine 162. NAD(+) contacts are provided by residues 179 to 182 (FLET) and asparagine 190. Glutamate 194 is a Zn(2+) binding site. 7-phospho-2-dehydro-3-deoxy-D-arabino-heptonate-binding positions include 194–197 (EVIK) and lysine 250. The active-site Proton acceptor; for 3-dehydroquinate synthase activity is the glutamate 260. 7-phospho-2-dehydro-3-deoxy-D-arabino-heptonate contacts are provided by residues 264–268 (RNLLN) and histidine 271. Histidine 271 lines the Zn(2+) pocket. The Proton acceptor; for 3-dehydroquinate synthase activity role is filled by histidine 275. 7-phospho-2-dehydro-3-deoxy-D-arabino-heptonate is bound by residues histidine 287 and lysine 356. Histidine 287 contacts Zn(2+). The interval 397-842 (VYPGVSPASE…WDTLRQKFAV (446 aa)) is EPSP synthase. The active-site For EPSP synthase activity is the cysteine 824. Residues 864–1055 (SASVFIIGMR…KKKQHSFFVS (192 aa)) form a shikimate kinase region. 871–878 (GMRGAGKT) provides a ligand contact to ATP. Residues 1056–1276 (LTLPDVRGAD…AAPGQLSATD (221 aa)) are 3-dehydroquinase. The active-site Proton acceptor; for 3-dehydroquinate dehydratase activity is histidine 1179. The Schiff-base intermediate with substrate; for 3-dehydroquinate dehydratase activity role is filled by lysine 1207. The shikimate dehydrogenase stretch occupies residues 1289 to 1578 (KKRFALFGSP…YERARAIVLG (290 aa)).

This sequence in the N-terminal section; belongs to the sugar phosphate cyclases superfamily. Dehydroquinate synthase family. In the 2nd section; belongs to the EPSP synthase family. The protein in the 3rd section; belongs to the shikimate kinase family. It in the 4th section; belongs to the type-I 3-dehydroquinase family. This sequence in the C-terminal section; belongs to the shikimate dehydrogenase family. As to quaternary structure, homodimer. The cofactor is Zn(2+).

The protein resides in the cytoplasm. The enzyme catalyses 7-phospho-2-dehydro-3-deoxy-D-arabino-heptonate = 3-dehydroquinate + phosphate. It catalyses the reaction 3-dehydroquinate = 3-dehydroshikimate + H2O. It carries out the reaction shikimate + NADP(+) = 3-dehydroshikimate + NADPH + H(+). The catalysed reaction is shikimate + ATP = 3-phosphoshikimate + ADP + H(+). The enzyme catalyses 3-phosphoshikimate + phosphoenolpyruvate = 5-O-(1-carboxyvinyl)-3-phosphoshikimate + phosphate. The protein operates within metabolic intermediate biosynthesis; chorismate biosynthesis; chorismate from D-erythrose 4-phosphate and phosphoenolpyruvate: step 2/7. Its pathway is metabolic intermediate biosynthesis; chorismate biosynthesis; chorismate from D-erythrose 4-phosphate and phosphoenolpyruvate: step 3/7. It participates in metabolic intermediate biosynthesis; chorismate biosynthesis; chorismate from D-erythrose 4-phosphate and phosphoenolpyruvate: step 4/7. It functions in the pathway metabolic intermediate biosynthesis; chorismate biosynthesis; chorismate from D-erythrose 4-phosphate and phosphoenolpyruvate: step 5/7. The protein operates within metabolic intermediate biosynthesis; chorismate biosynthesis; chorismate from D-erythrose 4-phosphate and phosphoenolpyruvate: step 6/7. The AROM polypeptide catalyzes 5 consecutive enzymatic reactions in prechorismate polyaromatic amino acid biosynthesis. This Neosartorya fischeri (strain ATCC 1020 / DSM 3700 / CBS 544.65 / FGSC A1164 / JCM 1740 / NRRL 181 / WB 181) (Aspergillus fischerianus) protein is Pentafunctional AROM polypeptide.